The following is a 232-amino-acid chain: Acetate--CoA ligase [ADP-forming] I subunit beta (232 aa).

The region spanning 27–63 (KEILKLYGIPVPEFKVARNEEEAVKFSGEIGYPVVMK) is the ATP-grasp domain. 53 to 64 (SGEIGYPVVMKI) contributes to the ATP binding site.

This sequence belongs to the acetate CoA ligase beta subunit family. Heterotetramer of two alpha and two beta subunits.

The protein localises to the cytoplasm. It carries out the reaction acetate + ATP + CoA = acetyl-CoA + ADP + phosphate. Its activity is regulated as follows. Activity is dependent on magnesium. Functionally, catalyzes the reversible formation of acetate and ATP from acetyl-CoA by using ADP and phosphate. Can use other substrates such as isobutyryl-CoA, propionyl-CoA and butyryl-CoA, but not indoleacetyl-CoA, phenylacetyl-CoA or succinyl-CoA. Seems to be involved primarily in the conversion of acetyl-CoA to acetate. Participates in the degradation of branched-chain amino acids via branched-chain-acyl-CoA esters. This is Acetate--CoA ligase [ADP-forming] I subunit beta from Pyrococcus furiosus (strain ATCC 43587 / DSM 3638 / JCM 8422 / Vc1).